A 280-amino-acid chain; its full sequence is Eukaryotic translation initiation factor 3 subunit F-1 (280 aa).

The MPN domain occupies 8 to 138; that stretch reads VRVHPVVLFQ…LRAYICIQLG (131 aa).

This sequence belongs to the eIF-3 subunit F family. Component of the eukaryotic translation initiation factor 3 (eIF-3) complex. The eIF-3 complex interacts with pix.

It is found in the cytoplasm. In terms of biological role, component of the eukaryotic translation initiation factor 3 (eIF-3) complex, which is involved in protein synthesis of a specialized repertoire of mRNAs and, together with other initiation factors, stimulates binding of mRNA and methionyl-tRNAi to the 40S ribosome. The eIF-3 complex specifically targets and initiates translation of a subset of mRNAs involved in cell proliferation. In Drosophila mojavensis (Fruit fly), this protein is Eukaryotic translation initiation factor 3 subunit F-1.